A 361-amino-acid polypeptide reads, in one-letter code: Peptide chain release factor 1 (361 aa).

Q237 is subject to N5-methylglutamine. Positions 287 to 297 (KQQKEQSDTRK) are enriched in basic and acidic residues. The segment at 287–313 (KQQKEQSDTRKSLVGSGDRSERIRTYN) is disordered.

It belongs to the prokaryotic/mitochondrial release factor family. In terms of processing, methylated by PrmC. Methylation increases the termination efficiency of RF1.

It localises to the cytoplasm. Its function is as follows. Peptide chain release factor 1 directs the termination of translation in response to the peptide chain termination codons UAG and UAA. The polypeptide is Peptide chain release factor 1 (Francisella tularensis subsp. tularensis (strain FSC 198)).